The sequence spans 439 residues: MRLSRFFLPILKETPKEAEIVSHRLMLRAGMIRQEAAGIYAWLPLGLRVLKKIEAIVREEQNRAGAIELLMPTLQLADLWRESGRYDAYGPEMLRIQDRHKRELLYGPTNEEMITEIFRGYIRSYKSLPLNLYHIQWKFRDEQRPRFGVMRGREFLMKDAYSFDIDEAGARRSYNRMFVAYLRTFARMGLKAIPMRAETGPIGGDLSHEFIVLAETGESGVYIDKDVLDLPIPGTEVDYDGDLTPIVRQWTTAYAATEDVHDGPRYEREVPEERRVHTRGIEVGQIFYFGTKYSESMKALVTGTDGVEQPIHGGSYGVGVSRLVGAIIEACHDEAGIKWPEAVAPFTVAILNLKQGASDTDEACERIYRELSARGVDVLYDDTDQRAGAKFATADLIGSPWQVMVGPKGLAEGKVEIKRRGDGSRENVALEDAVARLMA.

The protein belongs to the class-II aminoacyl-tRNA synthetase family. ProS type 2 subfamily. Homodimer.

It localises to the cytoplasm. The catalysed reaction is tRNA(Pro) + L-proline + ATP = L-prolyl-tRNA(Pro) + AMP + diphosphate. Its function is as follows. Catalyzes the attachment of proline to tRNA(Pro) in a two-step reaction: proline is first activated by ATP to form Pro-AMP and then transferred to the acceptor end of tRNA(Pro). This chain is Proline--tRNA ligase, found in Nitrobacter winogradskyi (strain ATCC 25391 / DSM 10237 / CIP 104748 / NCIMB 11846 / Nb-255).